The chain runs to 323 residues: Pathogenicity locus probable regulatory protein WtsA (323 aa).

Residues 41 to 251 form the Sigma-54 factor interaction domain; that stretch reads VAPLEIDLVL…ELKTAAKRFT (211 aa). Residues 52-59 and 123-132 contribute to the ATP site; these read GETGTGKD and EIDSMPLSLQ. A DNA-binding region (H-T-H motif) is located at residues 293 to 312; sequence IDEAAMELGMPLRTLYHRIK.

Its function is as follows. Positive activator of wtsB involved in plant pathogenicity. Probably interacts with sigma-54. The polypeptide is Pathogenicity locus probable regulatory protein WtsA (wtsA) (Pantoea stewartii subsp. stewartii (Erwinia stewartii)).